The primary structure comprises 230 residues: Oxaloacetate tautomerase FAHD1, mitochondrial (230 aa).

A mitochondrion-targeting transit peptide spans 1-26; it reads MAAAAAAAAQRLLAASTKIIGVGRNY. E73, E75, and D104 together coordinate Mg(2+).

The protein belongs to the FAH family. Mg(2+) serves as cofactor. Requires Mn(2+) as cofactor.

It localises to the mitochondrion. The enzyme catalyses oxaloacetate = enol-oxaloacetate. Its function is as follows. Tautomerase that converts enol-oxaloacetate, a strong inhibitor of succinate dehydrogenase, to the physiological keto form of oxaloacetate. The polypeptide is Oxaloacetate tautomerase FAHD1, mitochondrial (Oryza sativa subsp. japonica (Rice)).